The chain runs to 666 residues: DNA-directed RNA polymerase III subunit rpc3 (666 aa).

Disordered stretches follow at residues H130–Y153 and S375–R455. Positions N135 to Y153 are enriched in polar residues. Positions T593–I614 are leucine-zipper.

The protein belongs to the RNA polymerase beta chain family. As to quaternary structure, component of the RNA polymerase III (Pol III) complex consisting of 17 subunits.

The protein localises to the nucleus. Its function is as follows. DNA-dependent RNA polymerase catalyzes the transcription of DNA into RNA using the four ribonucleoside triphosphates as substrates. Specific core component of RNA polymerase III which synthesizes small RNAs, such as 5S rRNA and tRNAs. In Botryotinia fuckeliana (strain B05.10) (Noble rot fungus), this protein is DNA-directed RNA polymerase III subunit rpc3 (rpc82).